Reading from the N-terminus, the 513-residue chain is U3 small nucleolar RNA-associated protein 15 (513 aa).

6 WD repeats span residues 37-78, 79-118, 124-162, 166-206, 210-247, and 250-294; these read KEHN…KTFS, RFKDVVYSASFRSDGKLLCAGDATGLVSVYDSYNPRTILL, THPTHVTKFHTQDNKILATASDDRVTRLWDISNAYEPQL, GATD…STPI, NHDQPVENVIAVSPTQIVSCGGNNFKVWDLTSNKKLYE, and NFNK…QVKF. The interval 332–354 is disordered; sequence KKKEKRSSDKENAPASFNKNAKS.

As to quaternary structure, interacts with snoRNA U3. Interacts with MPP10. Component of the ribosomal small subunit (SSU) processome composed of at least 40 protein subunits and snoRNA U3. In the absence of snoRNA3, forms a complex with other t-UTPs. This complex can associate with pre-18S ribosomal RNAs.

The protein localises to the nucleus. Its subcellular location is the nucleolus. Functionally, involved in nucleolar processing of pre-18S ribosomal RNA. Required for optimal pre-ribosomal RNA transcription by RNA polymerase I together with a subset of U3 proteins required for transcription (t-UTPs). In Saccharomyces cerevisiae (strain ATCC 204508 / S288c) (Baker's yeast), this protein is U3 small nucleolar RNA-associated protein 15 (UTP15).